Reading from the N-terminus, the 156-residue chain is MSKKKGSNTLAENRKARHDYFIEETYEAGIELVGTEVKSIRQGKANLKDSYAEIRNGEVFVRNMHISPYEQGNIYNKDPLRDRKLLLHKSEIYKLVGFTTQQGYTLIPLSLYLKHGRVKVSLAVAKGKKNYDKRDAMLEKAAKREMDRQIKERSRY.

It belongs to the SmpB family.

It localises to the cytoplasm. Its function is as follows. Required for rescue of stalled ribosomes mediated by trans-translation. Binds to transfer-messenger RNA (tmRNA), required for stable association of tmRNA with ribosomes. tmRNA and SmpB together mimic tRNA shape, replacing the anticodon stem-loop with SmpB. tmRNA is encoded by the ssrA gene; the 2 termini fold to resemble tRNA(Ala) and it encodes a 'tag peptide', a short internal open reading frame. During trans-translation Ala-aminoacylated tmRNA acts like a tRNA, entering the A-site of stalled ribosomes, displacing the stalled mRNA. The ribosome then switches to translate the ORF on the tmRNA; the nascent peptide is terminated with the 'tag peptide' encoded by the tmRNA and targeted for degradation. The ribosome is freed to recommence translation, which seems to be the essential function of trans-translation. This Clostridium botulinum (strain Loch Maree / Type A3) protein is SsrA-binding protein.